We begin with the raw amino-acid sequence, 198 residues long: Proteasome subunit beta type-2 (198 aa).

It belongs to the peptidase T1B family. In terms of assembly, the 26S proteasome consists of a 20S proteasome core and two 19S regulatory subunits. The 20S proteasome core is composed of 28 subunits that are arranged in four stacked rings, resulting in a barrel-shaped structure. The two end rings are each formed by seven alpha subunits, and the two central rings are each formed by seven beta subunits. The catalytic chamber with the active sites is on the inside of the barrel.

The protein resides in the cytoplasm. It localises to the nucleus. Its function is as follows. Non-catalytic component of the proteasome, a multicatalytic proteinase complex which is characterized by its ability to cleave peptides with Arg, Phe, Tyr, Leu, and Glu adjacent to the leaving group at neutral or slightly basic pH. The proteasome has an ATP-dependent proteolytic activity. The chain is Proteasome subunit beta type-2 (psmB2) from Dictyostelium discoideum (Social amoeba).